Reading from the N-terminus, the 491-residue chain is GTPase Der (491 aa).

2 EngA-type G domains span residues 54-217 and 229-402; these read PVLA…PEYS and RRIA…ESWD. Residues 60–67, 107–111, 169–172, 235–242, 282–286, and 347–350 each bind GTP; these read GRPNVGKS, DTGGW, NKVD, DTAGI, and NKWD. The 83-residue stretch at 403–485 folds into the KH-like domain; sequence RRIPTGRLNA…PIEVNMRVRE (83 aa).

Belongs to the TRAFAC class TrmE-Era-EngA-EngB-Septin-like GTPase superfamily. EngA (Der) GTPase family. In terms of assembly, associates with the 50S ribosomal subunit.

GTPase that plays an essential role in the late steps of ribosome biogenesis. The polypeptide is GTPase Der (Paenarthrobacter aurescens (strain TC1)).